The sequence spans 392 residues: MSLPLPPALSELARALPYSRTQWLPIFVGFLIGYPILIRALRYKRHGEMKKKFYFPTRESMAEMTDEEAFLIQKEMAQLEFPFMFLTSGQFALFRTYGIPTISHLLTKTGQFSKPETSFKRYTDTAALIGEMVENSPTSQRAFISVARTRFLHSGYQASGKILDADLLYTLALFAVQPVRFIENFEWRTLSDLELCAIGTFWKSLGDALGISSEILPSGKTGFKDGIQWLEEVDVWSQDYEAKYMVPDPKNRESADQATAMLISNRYEAPTPGWSMVFSTLLAIRKLILRYLSPPRPAALAVSNIAQKPDKDDRYHRMSWDALPFYIRPTFWNRWGPMAWISWLMGHPVPGDLGQKKGPQGDPGNDEGIKDLKDGEMSLPLVWSKYHATTND.

The Lumenal portion of the chain corresponds to 1–21 (MSLPLPPALSELARALPYSRT). A helical transmembrane segment spans residues 22–41 (QWLPIFVGFLIGYPILIRAL). Residues 42–392 (RYKRHGEMKK…WSKYHATTND (351 aa)) are Cytoplasmic-facing. The tract at residues 352 to 376 (DLGQKKGPQGDPGNDEGIKDLKDGE) is disordered. A compositionally biased stretch (basic and acidic residues) spans 367–376 (EGIKDLKDGE).

This sequence belongs to the mpaB oxygenase family.

The protein resides in the endoplasmic reticulum membrane. The enzyme catalyses 4-farnesyl-3,5-dihydroxy-6-methylphthalide + AH2 + 2 O2 = (4E,8E)-10-(4,6-dihydroxy-7-methyl-3-oxo-1,3-dihydro-2-benzofuran-5-yl)-4,8-dimethyldeca-4,8-dienoate + acetone + A + H2O + H(+). Its pathway is secondary metabolite biosynthesis; terpenoid biosynthesis. Functionally, ER-bound oxygenase; part of the gene cluster that mediates the biosynthesis of mycophenolic acid (MPA), the first isolated antibiotic natural product in the world obtained from a culture of Penicillium brevicompactum in 1893. MpaB catalyzes the oxidative cleavage the C19-C20 double bond in farnesyl-DHMP (FDHMP) to yield FDHMP-3C via a mycophenolic aldehyde intermediate. The first step of the pathway is the synthesis of 5-methylorsellinic acid (5MOA) by the cytosolic polyketide synthase mpaC. 5MOA is then converted to the phthalide compound 5,7-dihydroxy-4,6-dimethylphthalide (DHMP) by the endoplasmic reticulum-bound cytochrome P450 monooxygenase mpaDE. MpaDE first catalyzes hydroxylation of 5-MOA to 4,6-dihydroxy-2-(hydroxymethyl)-3-methylbenzoic acid (DHMB). MpaDE then acts as a lactone synthase that catalyzes the ring closure to convert DHMB into DHMP. The next step is the prenylation of DHMP by the Golgi apparatus-associated prenyltransferase mpaA to yield farnesyl-DHMP (FDHMP). The ER-bound oxygenase mpaB then mediates the oxidative cleavage the C19-C20 double bond in FDHMP to yield FDHMP-3C via a mycophenolic aldehyde intermediate. The O-methyltransferase mpaG catalyzes the methylation of FDHMP-3C to yield MFDHMP-3C. After the cytosolic methylation of FDHMP-3C, MFDHMP-3C enters into peroxisomes probably via free diffusion due to its low molecular weight. Upon a peroxisomal CoA ligation reaction, catalyzed by a beta-oxidation component enzyme acyl-CoA ligase ACL891, MFDHMP-3C-CoA would then be restricted to peroxisomes for the following beta-oxidation pathway steps. The peroxisomal beta-oxidation machinery than converts MFDHMP-3C-CoA into MPA_CoA, via a beta-oxidation chain-shortening process. Finally mpaH acts as a peroxisomal acyl-CoA hydrolase with high substrate specificity toward MPA-CoA to release the final product MPA. The sequence is that of ER-bound oxygenase mpaB from Penicillium brevicompactum.